Reading from the N-terminus, the 126-residue chain is MSFPLWLWLALGGAVGAVCRQAAVLLLAPLVARTGFPAAVLLINVLGSFLLGLTLALTGRGVWPEAVRMTFGTGVLGAFTTFSTFSTELDGLLLRGQGGLALAYAALSVGLGLTAAVAGRVLGARL.

Transmembrane regions (helical) follow at residues 7–27 (LWLA…VLLL), 36–56 (FPAA…LTLA), 74–94 (GVLG…GLLL), and 98–118 (GGLA…AAVA). Na(+) contacts are provided by Gly77 and Thr80.

The protein belongs to the fluoride channel Fluc/FEX (TC 1.A.43) family.

Its subcellular location is the cell membrane. The catalysed reaction is fluoride(in) = fluoride(out). Na(+) is not transported, but it plays an essential structural role and its presence is essential for fluoride channel function. Its function is as follows. Fluoride-specific ion channel. Important for reducing fluoride concentration in the cell, thus reducing its toxicity. This chain is Fluoride-specific ion channel FluC, found in Deinococcus radiodurans (strain ATCC 13939 / DSM 20539 / JCM 16871 / CCUG 27074 / LMG 4051 / NBRC 15346 / NCIMB 9279 / VKM B-1422 / R1).